The primary structure comprises 326 residues: Tagatose 1,6-diphosphate aldolase (326 aa).

Belongs to the aldolase LacD family.

The catalysed reaction is D-tagatofuranose 1,6-bisphosphate = D-glyceraldehyde 3-phosphate + dihydroxyacetone phosphate. It functions in the pathway carbohydrate metabolism; D-tagatose 6-phosphate degradation; D-glyceraldehyde 3-phosphate and glycerone phosphate from D-tagatose 6-phosphate: step 2/2. In Staphylococcus aureus (strain MW2), this protein is Tagatose 1,6-diphosphate aldolase.